A 230-amino-acid polypeptide reads, in one-letter code: Urease accessory protein UreF (230 aa).

Belongs to the UreF family. As to quaternary structure, ureD, UreF and UreG form a complex that acts as a GTP-hydrolysis-dependent molecular chaperone, activating the urease apoprotein by helping to assemble the nickel containing metallocenter of UreC. The UreE protein probably delivers the nickel.

It is found in the cytoplasm. In terms of biological role, required for maturation of urease via the functional incorporation of the urease nickel metallocenter. This Marinomonas sp. (strain MWYL1) protein is Urease accessory protein UreF.